A 347-amino-acid polypeptide reads, in one-letter code: Heat-inducible transcription repressor HrcA (347 aa).

It belongs to the HrcA family.

Functionally, negative regulator of class I heat shock genes (grpE-dnaK-dnaJ and groELS operons). Prevents heat-shock induction of these operons. This is Heat-inducible transcription repressor HrcA from Lactococcus lactis subsp. cremoris (strain MG1363).